The sequence spans 95 residues: Basic phospholipase A2 (95 aa).

N6-palmitoyl lysine attachment occurs at residues lysine 7 and lysine 10. Ca(2+)-binding residues include tyrosine 23, glycine 25, and glycine 27. 5 disulfides stabilise this stretch: cysteine 24-cysteine 40, cysteine 39-cysteine 77, cysteine 46-cysteine 70, cysteine 53-cysteine 63, and cysteine 57-cysteine 68. The active site involves histidine 43. Residue aspartate 44 participates in Ca(2+) binding. Residue aspartate 71 is part of the active site.

As to quaternary structure, monomer. Ca(2+) serves as cofactor. As to expression, expressed by the venom gland.

Its subcellular location is the secreted. It catalyses the reaction a 1,2-diacyl-sn-glycero-3-phosphocholine + H2O = a 1-acyl-sn-glycero-3-phosphocholine + a fatty acid + H(+). Functionally, PLA2 catalyzes the calcium-dependent hydrolysis of the 2-acyl groups in 3-sn-phosphoglycerides. Induces local and systemic myotoxicity in an intramuscular mouse model. Induces local edema in a mouse footpad assay. Does not exhibit any anticoagulant effects. Does not mediate an antibacterial effect against Gram-negative and Gram-positive bacteria. The polypeptide is Basic phospholipase A2 (Agkistrodon piscivorus leucostoma (Western cottonmouth)).